The primary structure comprises 181 residues: MICGIDEVGRGCIFGPVLSAAVIFKTKPNFLNELDDSKKLTKTKREYLSSLILENAYYAFADISNEIIDKINIHNASLLAMQIAYQKLNIECNLVLVDGKFIPKIQAKQIRAIIKGDSMIDEIKAASIIAKVQRDKLMVEYDKIYPLYGLKKNKGYPTKEHKDAIKKHGILSLHRKSFRLI.

The 181-residue stretch at 1-181 folds into the RNase H type-2 domain; it reads MICGIDEVGR…SLHRKSFRLI (181 aa). A divalent metal cation contacts are provided by Asp6, Glu7, and Asp98.

Belongs to the RNase HII family. The cofactor is Mn(2+). Mg(2+) serves as cofactor.

Its subcellular location is the cytoplasm. The catalysed reaction is Endonucleolytic cleavage to 5'-phosphomonoester.. Its function is as follows. Endonuclease that specifically degrades the RNA of RNA-DNA hybrids. This Borrelia recurrentis (strain A1) protein is Ribonuclease HII.